Reading from the N-terminus, the 379-residue chain is Carbamoyl phosphate synthase small chain (379 aa).

The CPSase stretch occupies residues 1–189 (MSKSALLVLE…GLPEAKDDSE (189 aa)). L-glutamine-binding residues include S47, G241, and G243. The 187-residue stretch at 193–379 (HVVAYDFGAK…FIELIKQHSA (187 aa)) folds into the Glutamine amidotransferase type-1 domain. C269 (nucleophile) is an active-site residue. L-glutamine contacts are provided by L270, Q273, N311, G313, and F314. Catalysis depends on residues H353 and E355.

The protein belongs to the CarA family. As to quaternary structure, composed of two chains; the small (or glutamine) chain promotes the hydrolysis of glutamine to ammonia, which is used by the large (or ammonia) chain to synthesize carbamoyl phosphate. Tetramer of heterodimers (alpha,beta)4.

The catalysed reaction is hydrogencarbonate + L-glutamine + 2 ATP + H2O = carbamoyl phosphate + L-glutamate + 2 ADP + phosphate + 2 H(+). The enzyme catalyses L-glutamine + H2O = L-glutamate + NH4(+). Its pathway is amino-acid biosynthesis; L-arginine biosynthesis; carbamoyl phosphate from bicarbonate: step 1/1. It participates in pyrimidine metabolism; UMP biosynthesis via de novo pathway; (S)-dihydroorotate from bicarbonate: step 1/3. Its function is as follows. Small subunit of the glutamine-dependent carbamoyl phosphate synthetase (CPSase). CPSase catalyzes the formation of carbamoyl phosphate from the ammonia moiety of glutamine, carbonate, and phosphate donated by ATP, constituting the first step of 2 biosynthetic pathways, one leading to arginine and/or urea and the other to pyrimidine nucleotides. The small subunit (glutamine amidotransferase) binds and cleaves glutamine to supply the large subunit with the substrate ammonia. The protein is Carbamoyl phosphate synthase small chain of Vibrio vulnificus (strain YJ016).